Consider the following 235-residue polypeptide: Acyl-protein thioesterase 1 (235 aa).

Active-site charge relay system residues include Ser-119, Asp-172, and His-206.

This sequence belongs to the AB hydrolase superfamily. AB hydrolase 2 family.

The protein resides in the cytoplasm. The protein localises to the nucleus. It carries out the reaction S-hexadecanoyl-L-cysteinyl-[protein] + H2O = L-cysteinyl-[protein] + hexadecanoate + H(+). Hydrolyzes fatty acids from S-acylated cysteine residues in proteins with a strong preference for palmitoylated G-alpha proteins over other acyl substrates. Mediates the deacylation of G-alpha proteins such as GPA1 in vivo, but has weak or no activity toward palmitoylated Ras proteins. Has weak lysophospholipase activity in vitro; however such activity may not exist in vivo. This chain is Acyl-protein thioesterase 1, found in Eremothecium gossypii (strain ATCC 10895 / CBS 109.51 / FGSC 9923 / NRRL Y-1056) (Yeast).